Here is a 440-residue protein sequence, read N- to C-terminus: Beta-1,3-galactosyl-O-glycosyl-glycoprotein beta-1,6-N-acetylglucosaminyltransferase 3 (440 aa).

Topologically, residues 1-12 (MKMTGWKKKLCR) are cytoplasmic. A helical; Signal-anchor for type II membrane protein membrane pass occupies residues 13–30 (GHHLWALGCYMLLAVVAL). Topologically, residues 31–440 (RLSLRLKCDV…RHKAIYGTEL (410 aa)) are lumenal. 4 disulfide bridges follow: cysteine 73–cysteine 230, cysteine 164–cysteine 384, cysteine 185–cysteine 212, and cysteine 393–cysteine 425. Residue asparagine 108 is glycosylated (N-linked (GlcNAc...) asparagine).

This sequence belongs to the glycosyltransferase 14 family. In terms of processing, N-glycosylated.

The protein localises to the golgi apparatus membrane. The catalysed reaction is a 3-O-[beta-D-galactosyl-(1-&gt;3)-N-acetyl-alpha-D-galactosaminyl]-L-seryl-[protein] + UDP-N-acetyl-alpha-D-glucosamine = 3-O-{beta-D-galactosyl-(1-&gt;3)-[N-acetyl-beta-D-glucosaminyl-(1-&gt;6)]-N-acetyl-alpha-D-galactosaminyl}-L-seryl-[protein] + UDP + H(+). The enzyme catalyses a 3-O-[beta-D-galactosyl-(1-&gt;3)-N-acetyl-alpha-D-galactosaminyl]-L-threonyl-[protein] + UDP-N-acetyl-alpha-D-glucosamine = a 3-O-{beta-D-galactosyl-(1-&gt;3)-[N-acetyl-beta-D-glucosaminyl-(1-&gt;6)]-N-acetyl-alpha-D-galactosaminyl}-L-threonyl-[protein] + UDP + H(+). It catalyses the reaction a beta-D-Gal-(1-&gt;4)-beta-D-GlcNAc-(1-&gt;3)-beta-D-Gal-(1-&gt;4)-beta-D-GlcNAc derivative + UDP-N-acetyl-alpha-D-glucosamine = a beta-D-Gal-(1-&gt;4)-beta-D-GlcNAc-(1-&gt;3)-[beta-D-GlcNAc-(1-&gt;6)]-beta-D-Gal-(1-&gt;4)-N-acetyl-beta-D-glucosaminyl derivative + UDP + H(+). It carries out the reaction 3-O-[N-acetyl-beta-D-glucosaminyl-(1-&gt;3)-N-acetyl-alpha-D-galactosaminyl]-L-seryl-[protein] + UDP-N-acetyl-alpha-D-glucosamine = 3-O-[N-acetyl-beta-D-glucosaminyl-(1-&gt;3)-[N-acetyl-beta-D-glucosaminyl-(1-&gt;6)]-N-acetyl-alpha-D-galactosaminyl]-L-seryl-[protein] + UDP + H(+). The catalysed reaction is a 3-O-[N-acetyl-beta-D-glucosaminyl-(1-&gt;3)-N-acetyl-alpha-D-galactosaminyl]-L-threonyl-[protein] + UDP-N-acetyl-alpha-D-glucosamine = 3-O-[N-acetyl-beta-D-glucosaminyl-(1-&gt;3)-[N-acetyl-beta-D-glucosaminyl-(1-&gt;6)]-N-acetyl-alpha-D-galactosaminyl]-L-threonyl-[protein] + UDP + H(+). The protein operates within protein modification; protein glycosylation. Glycosyltransferase that can synthesize all known mucin beta 6 N-acetylglucosaminides. Mediates core 2 and core 4 O-glycan branching, 2 important steps in mucin-type biosynthesis. Also has I-branching enzyme activity by converting linear into branched poly-N-acetyllactosaminoglycans, leading to introduce the blood group I antigen during embryonic development. This is Beta-1,3-galactosyl-O-glycosyl-glycoprotein beta-1,6-N-acetylglucosaminyltransferase 3 (GCNT3) from Ovis aries (Sheep).